We begin with the raw amino-acid sequence, 252 residues long: Triosephosphate isomerase (252 aa).

Residue 9–11 (NWK) participates in substrate binding. Histidine 95 (electrophile) is an active-site residue. The Proton acceptor role is filled by glutamate 167. Substrate-binding positions include glycine 173, serine 213, and 234–235 (GG).

It belongs to the triosephosphate isomerase family. As to quaternary structure, homodimer.

The protein resides in the cytoplasm. It carries out the reaction D-glyceraldehyde 3-phosphate = dihydroxyacetone phosphate. It functions in the pathway carbohydrate biosynthesis; gluconeogenesis. Its pathway is carbohydrate degradation; glycolysis; D-glyceraldehyde 3-phosphate from glycerone phosphate: step 1/1. Functionally, involved in the gluconeogenesis. Catalyzes stereospecifically the conversion of dihydroxyacetone phosphate (DHAP) to D-glyceraldehyde-3-phosphate (G3P). This chain is Triosephosphate isomerase, found in Syntrophotalea carbinolica (strain DSM 2380 / NBRC 103641 / GraBd1) (Pelobacter carbinolicus).